A 158-amino-acid chain; its full sequence is SsrA-binding protein (158 aa).

The protein belongs to the SmpB family.

The protein localises to the cytoplasm. Functionally, required for rescue of stalled ribosomes mediated by trans-translation. Binds to transfer-messenger RNA (tmRNA), required for stable association of tmRNA with ribosomes. tmRNA and SmpB together mimic tRNA shape, replacing the anticodon stem-loop with SmpB. tmRNA is encoded by the ssrA gene; the 2 termini fold to resemble tRNA(Ala) and it encodes a 'tag peptide', a short internal open reading frame. During trans-translation Ala-aminoacylated tmRNA acts like a tRNA, entering the A-site of stalled ribosomes, displacing the stalled mRNA. The ribosome then switches to translate the ORF on the tmRNA; the nascent peptide is terminated with the 'tag peptide' encoded by the tmRNA and targeted for degradation. The ribosome is freed to recommence translation, which seems to be the essential function of trans-translation. The sequence is that of SsrA-binding protein from Hydrogenovibrio crunogenus (strain DSM 25203 / XCL-2) (Thiomicrospira crunogena).